A 916-amino-acid chain; its full sequence is DNA mismatch repair protein MutS (916 aa).

A disordered region spans residues 1 to 47 (MSEALSVPAAEGENTVTASESPDLAATSARAEKVGKQEKPEKAEKQS). The span at 30–45 (RAEKVGKQEKPEKAEK) shows a compositional bias: basic and acidic residues. Residue 656 to 663 (GPNMGGKS) participates in ATP binding. Polar residues predominate over residues 843–861 (ADATPTPQMDLFSAQSSPS). Residues 843 to 880 (ADATPTPQMDLFSAQSSPSADDEDDKSAGQSAVPPAQA) form a disordered region.

It belongs to the DNA mismatch repair MutS family.

Its function is as follows. This protein is involved in the repair of mismatches in DNA. It is possible that it carries out the mismatch recognition step. This protein has a weak ATPase activity. This Cupriavidus metallidurans (strain ATCC 43123 / DSM 2839 / NBRC 102507 / CH34) (Ralstonia metallidurans) protein is DNA mismatch repair protein MutS.